The sequence spans 416 residues: NADH-quinone oxidoreductase subunit D (416 aa).

The protein belongs to the complex I 49 kDa subunit family. As to quaternary structure, NDH-1 is composed of 14 different subunits. Subunits NuoB, C, D, E, F, and G constitute the peripheral sector of the complex.

It localises to the cell inner membrane. The catalysed reaction is a quinone + NADH + 5 H(+)(in) = a quinol + NAD(+) + 4 H(+)(out). In terms of biological role, NDH-1 shuttles electrons from NADH, via FMN and iron-sulfur (Fe-S) centers, to quinones in the respiratory chain. The immediate electron acceptor for the enzyme in this species is believed to be ubiquinone. Couples the redox reaction to proton translocation (for every two electrons transferred, four hydrogen ions are translocated across the cytoplasmic membrane), and thus conserves the redox energy in a proton gradient. The sequence is that of NADH-quinone oxidoreductase subunit D from Caulobacter sp. (strain K31).